The chain runs to 414 residues: NADH kinase POS5, mitochondrial (414 aa).

This sequence belongs to the NAD kinase family.

The protein localises to the mitochondrion matrix. The catalysed reaction is NADH + ATP = ADP + NADPH + H(+). In terms of biological role, phosphorylates both NADH and NAD(+), with a twofold preference for NADH. Anti-oxidant factor and key source of the cellular reductant NADPH. The protein is NADH kinase POS5, mitochondrial (POS5) of Saccharomyces cerevisiae (strain ATCC 204508 / S288c) (Baker's yeast).